Reading from the N-terminus, the 493-residue chain is Glutamate--tRNA ligase (493 aa).

A 'HIGH' region motif is present at residues 10 to 20 (PSPTGDPHVGT). Positions 251 to 255 (KLSKR) match the 'KMSKS' region motif. Position 254 (K254) interacts with ATP.

This sequence belongs to the class-I aminoacyl-tRNA synthetase family. Glutamate--tRNA ligase type 1 subfamily. As to quaternary structure, monomer.

It is found in the cytoplasm. It carries out the reaction tRNA(Glu) + L-glutamate + ATP = L-glutamyl-tRNA(Glu) + AMP + diphosphate. In terms of biological role, catalyzes the attachment of glutamate to tRNA(Glu) in a two-step reaction: glutamate is first activated by ATP to form Glu-AMP and then transferred to the acceptor end of tRNA(Glu). The chain is Glutamate--tRNA ligase from Marinomonas sp. (strain MWYL1).